The sequence spans 333 residues: Transcription initiation factor IIB (333 aa).

A TFIIB-type zinc finger spans residues 33–64 (EVYRCPICGNDKFIYNYERGEVVCIVCGAVVQ). Residues Cys37, Cys40, Cys56, and Cys59 each coordinate Zn(2+). 2 repeat units span residues 149–232 (QELE…LREL) and 243–324 (LYIS…ELAK).

Belongs to the TFIIB family.

Its function is as follows. Stabilizes TBP binding to an archaeal box-A promoter. Also responsible for recruiting RNA polymerase II to the pre-initiation complex (DNA-TBP-TFIIB). This is Transcription initiation factor IIB from Pyrobaculum neutrophilum (strain DSM 2338 / JCM 9278 / NBRC 100436 / V24Sta) (Thermoproteus neutrophilus).